Consider the following 538-residue polypeptide: Chaperonin GroEL (538 aa).

ATP is bound by residues Thr-29–Pro-32, Asp-86–Thr-90, Gly-413, Asp-479–Leu-481, and Asp-495.

Belongs to the chaperonin (HSP60) family. Forms a cylinder of 14 subunits composed of two heptameric rings stacked back-to-back. Interacts with the co-chaperonin GroES.

Its subcellular location is the cytoplasm. It carries out the reaction ATP + H2O + a folded polypeptide = ADP + phosphate + an unfolded polypeptide.. Together with its co-chaperonin GroES, plays an essential role in assisting protein folding. The GroEL-GroES system forms a nano-cage that allows encapsulation of the non-native substrate proteins and provides a physical environment optimized to promote and accelerate protein folding. The protein is Chaperonin GroEL of Thermotoga neapolitana.